The primary structure comprises 93 residues: Acylphosphatase (93 aa).

One can recognise an Acylphosphatase-like domain in the interval 5-93; the sequence is CIIAWVHGRV…EELTGFRIRY (89 aa). Catalysis depends on residues Arg-20 and Asn-38.

The protein belongs to the acylphosphatase family.

The catalysed reaction is an acyl phosphate + H2O = a carboxylate + phosphate + H(+). This is Acylphosphatase (acyP) from Citrobacter koseri (strain ATCC BAA-895 / CDC 4225-83 / SGSC4696).